The chain runs to 188 residues: Ribosome maturation factor RimM (188 aa).

One can recognise a PRC barrel domain in the interval 96-169 (DDEFYYADLE…TLLIDPLAAG (74 aa)).

The protein belongs to the RimM family. As to quaternary structure, binds ribosomal protein uS19.

The protein resides in the cytoplasm. In terms of biological role, an accessory protein needed during the final step in the assembly of 30S ribosomal subunit, possibly for assembly of the head region. Essential for efficient processing of 16S rRNA. May be needed both before and after RbfA during the maturation of 16S rRNA. It has affinity for free ribosomal 30S subunits but not for 70S ribosomes. This Rhizobium etli (strain ATCC 51251 / DSM 11541 / JCM 21823 / NBRC 15573 / CFN 42) protein is Ribosome maturation factor RimM.